We begin with the raw amino-acid sequence, 200 residues long: Holliday junction branch migration complex subunit RuvA (200 aa).

A domain I region spans residues 1–64 (MLSYLSGTLI…EDALQLYGFI (64 aa)). The domain II stretch occupies residues 65-143 (TTEDREVFKL…KLDLKIDIKE (79 aa)). The flexible linker stretch occupies residues 144–148 (TAFRS). A domain III region spans residues 149–200 (DKQQVRNDAYSALISLGFTKSIAEKAMRAAIAEVPDGSVDDLIRVALRHVQS).

Belongs to the RuvA family. As to quaternary structure, homotetramer. Forms an RuvA(8)-RuvB(12)-Holliday junction (HJ) complex. HJ DNA is sandwiched between 2 RuvA tetramers; dsDNA enters through RuvA and exits via RuvB. An RuvB hexamer assembles on each DNA strand where it exits the tetramer. Each RuvB hexamer is contacted by two RuvA subunits (via domain III) on 2 adjacent RuvB subunits; this complex drives branch migration. In the full resolvosome a probable DNA-RuvA(4)-RuvB(12)-RuvC(2) complex forms which resolves the HJ.

It is found in the cytoplasm. Functionally, the RuvA-RuvB-RuvC complex processes Holliday junction (HJ) DNA during genetic recombination and DNA repair, while the RuvA-RuvB complex plays an important role in the rescue of blocked DNA replication forks via replication fork reversal (RFR). RuvA specifically binds to HJ cruciform DNA, conferring on it an open structure. The RuvB hexamer acts as an ATP-dependent pump, pulling dsDNA into and through the RuvAB complex. HJ branch migration allows RuvC to scan DNA until it finds its consensus sequence, where it cleaves and resolves the cruciform DNA. In Chloroherpeton thalassium (strain ATCC 35110 / GB-78), this protein is Holliday junction branch migration complex subunit RuvA.